We begin with the raw amino-acid sequence, 113 residues long: U11-theraphotoxin-Hhn1a (113 aa).

The first 21 residues, 1–21, serve as a signal peptide directing secretion; that stretch reads MNTVRVTFLLVFVLAVSLGQA. Residues 22–74 constitute a propeptide that is removed on maturation; that stretch reads DKDENRMEMQEKTEQGKSYLDFAENLLLQKLEELEAKPLEEDSEESRNSRQKR. Basic and acidic residues predominate over residues 57–69; it reads AKPLEEDSEESRN. The segment at 57 to 83 is disordered; that stretch reads AKPLEEDSEESRNSRQKRCIGEGVPCD. 3 disulfides stabilise this stretch: cysteine 75–cysteine 90, cysteine 82–cysteine 95, and cysteine 89–cysteine 110.

This sequence belongs to the neurotoxin 14 (magi-1) family. 01 (HNTX-16) subfamily. In terms of tissue distribution, expressed by the venom gland.

It is found in the secreted. In terms of biological role, probable ion channel inhibitor. The protein is U11-theraphotoxin-Hhn1a of Cyriopagopus hainanus (Chinese bird spider).